The following is a 648-amino-acid chain: RAF proto-oncogene serine/threonine-protein kinase (648 aa).

Serine 29 is modified (phosphoserine; by MAPK1). The residue at position 43 (serine 43) is a Phosphoserine. Residues 56–131 (NTIRVFLPNK…IGEELQVDFL (76 aa)) form the RBD domain. Residues 138–184 (THNFARKTFLKLAFCDICQKFLLNGFRCQTCGYKFHEHCSTKVPTMC) form a Phorbol-ester/DAG-type zinc finger. Zn(2+)-binding residues include histidine 139, cysteine 152, cysteine 155, cysteine 165, cysteine 168, histidine 173, cysteine 176, and cysteine 184. Positions 217-335 (MRESVSRMPA…EKNKIRPRGQ (119 aa)) are disordered. Serine 233 carries the phosphoserine; by PKA modification. The segment covering 239 to 271 (TFNTSSPSSEGSLSQRQRSTSTPNVHMVSTTLP) has biased composition (polar residues). Phosphoserine is present on residues serine 252 and serine 259. Threonine 268 is modified (phosphothreonine; by autocatalysis). Residue threonine 269 is modified to Phosphothreonine; by PKA. Residues 275 to 285 (RMIEDAIRSHS) are compositionally biased toward basic and acidic residues. The span at 286 to 301 (ESASPSALSSSPNNLS) shows a compositional bias: low complexity. Serine 289, serine 296, and serine 301 each carry phosphoserine; by MAPK1. An interaction with PEBP1/RKIP region spans residues 331–349 (RPRGQRDSSYYWEIEASEV). Serine 338 is modified (phosphoserine; by PAK1, PAK2, PAK3 and PAK5). Phosphoserine; by PAK1, PAK2 and PAK3 is present on serine 339. A phosphotyrosine; by SRC mark is found at tyrosine 340 and tyrosine 341. Positions 349-609 (VMLSTRIGSG…PQILSSIELL (261 aa)) constitute a Protein kinase domain. Residues 355–363 (IGSGSFGTV) and lysine 375 each bind ATP. Residue aspartate 468 is the Proton acceptor of the active site. A Phosphoserine modification is found at serine 471. Threonine 491 carries the phosphothreonine modification. Residue serine 494 is modified to Phosphoserine. Residues serine 497 and serine 499 each carry the phosphoserine; by PKC modification. Arginine 563 bears the Symmetric dimethylarginine; by PRMT5 mark. A Phosphoserine modification is found at serine 621. Position 642 is a phosphoserine; by MAPK1 (serine 642).

The protein belongs to the protein kinase superfamily. TKL Ser/Thr protein kinase family. RAF subfamily. Monomer. Homodimer. Heterodimerizes with BRAF and this heterodimer possesses a highly increased kinase activity compared to the respective homodimers or monomers. Heterodimerization is mitogen-regulated and enhanced by 14-3-3 proteins. MAPK1/ERK2 activation can induce a negative feedback that promotes the dissociation of the heterodimer. Forms a multiprotein complex with Ras (M-Ras/MRAS), SHOC2 and protein phosphatase 1 (PPP1CA, PPP1CB and PPP1CC). Interacts with LZTR1. Interacts with Ras proteins; the interaction is antagonized by RIN1. Weakly interacts with RIT1. Interacts with STK3/MST2; the interaction inhibits its pro-apoptotic activity. Interacts (when phosphorylated at Ser-259) with YWHAZ (unphosphorylated at 'Thr-232'). Interacts with MAP3K5/ASF1 (via N-terminus) and this interaction inhibits the proapoptotic function of MAP3K5/ASK1. Interacts with PAK1 (via kinase domain). The phosphorylated form interacts with PIN1. The Ser-338 and Ser-339 phosphorylated form (by PAK1) interacts with BCL2. Interacts with PEBP1/RKIP and this interaction is enhanced if RAF1 is phosphorylated on residues Ser-338, Ser-339, Tyr-340 and Tyr-341. Interacts with ADCY2, ADCY5, ADCY6, DGKH, RCAN1/DSCR1, PPP1R12A, PKB/AKT1, PPP2CA, PPP2R1B, SPRY2, SPRY4, CNKSR1/CNK1, KSR2 and PHB/prohibitin. Interacts with ROCK2. Interacts (via N-terminus) with RGS14 (via RBD domains); the interaction mediates the formation of a ternary complex with BRAF, a ternary complex inhibited by GNAI1. Probably forms a complex composed of chaperones HSP90 and HSP70, co-chaperones CDC37, PPP5C, TSC1 and client protein TSC2, CDK4, AKT, RAF1 and NR3C1; this complex does not contain co-chaperones STIP1/HOP and PTGES3/p23. Interacts with MAP2K1/MEK1 and MAP2K2/MEK2. In its active form, interacts with PRMT5. Interacts with FAM83B; displaces 14-3-3 proteins from RAF1 and activates RAF1. Interacts with PDE8A; the interaction promotes RAF1 activity. Interacts with MFHAS1. Interacts with GLS. Interacts with YWHAZ. Interacts with NEK10 and MAP2K1; the interaction is direct with NEK10 and required for ERK1/2-signaling pathway activation in response to UV irradiation. It depends on Zn(2+) as a cofactor. Post-translationally, phosphorylation at Thr-269, Ser-338, Tyr-341, Thr-491 and Ser-494 results in its activation. Phosphorylation at Ser-29, Ser-43, Ser-289, Ser-296, Ser-301 and Ser-642 by MAPK1/ERK2 results in its inactivation. Phosphorylation at Ser-259 induces the interaction with YWHAZ and inactivates kinase activity. Dephosphorylation of Ser-259 by the SHOC2-MRAS-PP1c (SMP) complex consisting of SHOC2, GTP-bound M-Ras/MRAS and the catalytic subunit of protein phosphatase 1 (PPP1CA, PPP1CB or PPP1CC); this relieves inactivation and stimulates kinase activity. Phosphorylation at Ser-338 by PAK1 and PAK5 and Ser-339 by PAK1 is required for its mitochondrial localization. Phosphorylation at Ser-621 in response to growth factor treatment stabilizes the protein, possibly by preventing proteasomal degradation. Phosphorylation at Ser-289, Ser-296, Ser-301, Ser-338 and Ser-621 are somehow linked to the methylation potential of cells. Treatment of cells with HGF in the presence of the methylation inhibitor 5'-methylthioadenosine (MTA) results in increased phosphorylation at Ser-338 and Ser-621 and decreased phosphorylation at Ser-296, Ser-301 and Ser-338. Dephosphorylation at Ser-338 by PPP5C results in a decreased of activity. In terms of processing, methylated in response to EGF treatment. This modification leads to destabilization of the protein, possibly through proteasomal degradation.

It localises to the cytoplasm. The protein localises to the cell membrane. The protein resides in the mitochondrion. It is found in the nucleus. The enzyme catalyses L-seryl-[protein] + ATP = O-phospho-L-seryl-[protein] + ADP + H(+). The catalysed reaction is L-threonyl-[protein] + ATP = O-phospho-L-threonyl-[protein] + ADP + H(+). With respect to regulation, regulation is a highly complex process involving membrane recruitment, protein-protein interactions, dimerization, and phosphorylation/dephosphorylation events. Ras-GTP recruits RAF1 to the membrane, thereby promoting its activation. The inactive conformation of RAF1 is maintained by autoinhibitory interactions occurring between the N-terminal regulatory and the C-terminal catalytic domains and by the binding of a 14-3-3 protein that contacts two phosphorylation sites, Ser-259 and Ser-621. Upon mitogenic stimulation, Ras and PPP2R1A cooperate to release autoinhibition and the subsequent phosphorylation of activating sites: Ser-338, Tyr-341, Thr-491, and Ser-494, yields a fully active kinase. Through a negative feedback mechanism involving MAPK1/ERK2, RAF1 is phosphorylated on Ser-29, Ser-43, Ser-289, Ser-296, Ser-301 and Ser-642 by MAPK1/ERK2, which yields an inactive, desensitized kinase. The signaling-competent conformation of RAF1 is finally re-established by the coordinated action of PIN1, a prolyl isomerase that converts pSer and pThr residues from the cis to the trans conformation, which is preferentially recognized and dephosphorylated by PPP2R1A. Activated by homodimerization and heterodimerization (with BRAF). Also regulated through association with other proteins such as KSR2, CNKSR1/CNK1, PEBP1/RKIP, PHB/prohibitin and SPRY4. PEBP1/RKIP acts by dissociating RAF1 from its substrates MAP2K1/MEK1 and MAP2K2/MEK2. PHB/prohibitin facilitates the displacement of 14-3-3 from RAF1 by activated Ras, thereby promoting cell membrane localization and phosphorylation of RAF1 at the activating Ser-338. SPRY4 inhibits Ras-independent, but not Ras-dependent, activation of RAF1. CNKSR1/CNK1 regulates Src-mediated RAF1 activation. Serine/threonine-protein kinase that acts as a regulatory link between the membrane-associated Ras GTPases and the MAPK/ERK cascade, and this critical regulatory link functions as a switch determining cell fate decisions including proliferation, differentiation, apoptosis, survival and oncogenic transformation. RAF1 activation initiates a mitogen-activated protein kinase (MAPK) cascade that comprises a sequential phosphorylation of the dual-specific MAPK kinases (MAP2K1/MEK1 and MAP2K2/MEK2) and the extracellular signal-regulated kinases (MAPK3/ERK1 and MAPK1/ERK2). The phosphorylated form of RAF1 (on residues Ser-338 and Ser-339, by PAK1) phosphorylates BAD/Bcl2-antagonist of cell death at 'Ser-75'. Phosphorylates adenylyl cyclases: ADCY2, ADCY5 and ADCY6, resulting in their activation. Phosphorylates PPP1R12A resulting in inhibition of the phosphatase activity. Can promote NF-kB activation and inhibit signal transducers involved in motility (ROCK2), apoptosis (MAP3K5/ASK1 and STK3/MST2), proliferation and angiogenesis (RB1). Can protect cells from apoptosis also by translocating to the mitochondria where it binds BCL2 and displaces BAD/Bcl2-antagonist of cell death. Regulates Rho signaling and migration, and is required for normal wound healing. Plays a role in the oncogenic transformation of epithelial cells via repression of the TJ protein, occludin (OCLN) by inducing the up-regulation of a transcriptional repressor SNAI2/SLUG, which induces down-regulation of OCLN. Restricts caspase activation in response to selected stimuli, notably Fas stimulation, pathogen-mediated macrophage apoptosis, and erythroid differentiation. Phosphorylates TNNT2/cardiac muscle troponin T. In Rattus norvegicus (Rat), this protein is RAF proto-oncogene serine/threonine-protein kinase (Raf1).